Reading from the N-terminus, the 65-residue chain is UPF0434 protein VFMJ11_A0475 (65 aa).

It belongs to the UPF0434 family.

The chain is UPF0434 protein VFMJ11_A0475 from Aliivibrio fischeri (strain MJ11) (Vibrio fischeri).